Reading from the N-terminus, the 68-residue chain is uncharacterized protein (68 aa).

Residues A24 to F44 traverse the membrane as a helical segment.

The protein resides in the endoplasmic reticulum. Its subcellular location is the membrane. This is an uncharacterized protein from Saccharomyces cerevisiae (strain ATCC 204508 / S288c) (Baker's yeast).